Reading from the N-terminus, the 224-residue chain is MSIRDWPEAERPREKLLEQGAAALSDAELLAIFLRTGVTGCSAVELSRRLLSEFGGLRALLEADLASFCGHLGLGVAKYAQLQAVLEMGRRHLAERLRRDSILESPQAVRDYLKARLRHEQHEVFACLFLDTRHRVLAFEVLFQGSIDGASVYPRQVVKRTLAHNAAALILTHNHPSGDARPSLADRQLTARLKEALALIDVRVLDHFIIGDGEPLSLAEYGWL.

One can recognise an MPN domain in the interval 102 to 224 (ILESPQAVRD…PLSLAEYGWL (123 aa)). Residues His173, His175, and Asp186 each contribute to the Zn(2+) site. The JAMM motif signature appears at 173 to 186 (HNHPSGDARPSLAD).

This sequence belongs to the UPF0758 family.

This chain is UPF0758 protein PLES_57141, found in Pseudomonas aeruginosa (strain LESB58).